A 189-amino-acid chain; its full sequence is UPF0301 protein PLES_04031 (189 aa).

The protein belongs to the UPF0301 (AlgH) family.

The chain is UPF0301 protein PLES_04031 from Pseudomonas aeruginosa (strain LESB58).